A 77-amino-acid chain; its full sequence is Putative regulatory protein tsl2331 (77 aa).

It belongs to the RemA family.

This chain is Putative regulatory protein tsl2331, found in Thermosynechococcus vestitus (strain NIES-2133 / IAM M-273 / BP-1).